Consider the following 497-residue polypeptide: Probable pectinesterase 30 (497 aa).

Residues 1–21 (MLVKVFSFFILMIIMVIGVSK) form the signal peptide. N-linked (GlcNAc...) asparagine glycans are attached at residues N238 and N254. T263 provides a ligand contact to substrate. Residue D316 is the Proton donor of the active site. Cysteines 330 and 350 form a disulfide. D337 acts as the Nucleophile in catalysis. An N-linked (GlcNAc...) asparagine glycan is attached at N385. Substrate is bound by residues R403 and W405.

The protein belongs to the pectinesterase family. As to expression, expressed in siliques.

It localises to the secreted. The protein resides in the cell wall. It catalyses the reaction [(1-&gt;4)-alpha-D-galacturonosyl methyl ester](n) + n H2O = [(1-&gt;4)-alpha-D-galacturonosyl](n) + n methanol + n H(+). It functions in the pathway glycan metabolism; pectin degradation; 2-dehydro-3-deoxy-D-gluconate from pectin: step 1/5. In terms of biological role, acts in the modification of cell walls via demethylesterification of cell wall pectin. The polypeptide is Probable pectinesterase 30 (PME30) (Arabidopsis thaliana (Mouse-ear cress)).